A 606-amino-acid polypeptide reads, in one-letter code: NADH-ubiquinone oxidoreductase chain 5 (606 aa).

A run of 16 helical transmembrane segments spans residues 4–24, 43–63, 84–104, 114–134, 140–160, 171–191, 213–233, 241–261, 272–292, 301–320, 325–347, 366–386, 413–433, 457–477, 485–505, and 582–602; these read FSSL…AINF, AFIT…EMII, FFSM…MEFS, INQF…LVTA, LFIG…WWYG, AILY…WFLI, LMGL…HPWL, TPVS…FLLI, FGQS…AMCA, IIAF…IGIN, AFLH…GSII, MPFT…MPFL, LVAT…ALLG, LLIG…PMTI, YLKM…LEIS, and GLIK…TTLL.

Belongs to the complex I subunit 5 family. Core subunit of respiratory chain NADH dehydrogenase (Complex I) which is composed of 45 different subunits.

It is found in the mitochondrion inner membrane. It carries out the reaction a ubiquinone + NADH + 5 H(+)(in) = a ubiquinol + NAD(+) + 4 H(+)(out). Its function is as follows. Core subunit of the mitochondrial membrane respiratory chain NADH dehydrogenase (Complex I) which catalyzes electron transfer from NADH through the respiratory chain, using ubiquinone as an electron acceptor. Essential for the catalytic activity and assembly of complex I. This Ovis aries (Sheep) protein is NADH-ubiquinone oxidoreductase chain 5 (MT-ND5).